The sequence spans 83 residues: Cytochrome b559 subunit alpha (83 aa).

Residues 21 to 35 traverse the membrane as a helical segment; it reads VIHSITIPSLFVAGW. His-23 provides a ligand contact to heme.

Belongs to the PsbE/PsbF family. Heterodimer of an alpha subunit and a beta subunit. PSII is composed of 1 copy each of membrane proteins PsbA, PsbB, PsbC, PsbD, PsbE, PsbF, PsbH, PsbI, PsbJ, PsbK, PsbL, PsbM, PsbT, PsbX, PsbY, PsbZ, Psb30/Ycf12, at least 3 peripheral proteins of the oxygen-evolving complex and a large number of cofactors. It forms dimeric complexes. Heme b serves as cofactor.

It is found in the plastid. It localises to the chloroplast thylakoid membrane. In terms of biological role, this b-type cytochrome is tightly associated with the reaction center of photosystem II (PSII). PSII is a light-driven water:plastoquinone oxidoreductase that uses light energy to abstract electrons from H(2)O, generating O(2) and a proton gradient subsequently used for ATP formation. It consists of a core antenna complex that captures photons, and an electron transfer chain that converts photonic excitation into a charge separation. The polypeptide is Cytochrome b559 subunit alpha (Nephroselmis olivacea (Green alga)).